Reading from the N-terminus, the 245-residue chain is tRNA pseudouridine synthase A (245 aa).

The active-site Nucleophile is D52. A substrate-binding site is contributed by Y111.

The protein belongs to the tRNA pseudouridine synthase TruA family. In terms of assembly, homodimer.

The enzyme catalyses uridine(38/39/40) in tRNA = pseudouridine(38/39/40) in tRNA. Formation of pseudouridine at positions 38, 39 and 40 in the anticodon stem and loop of transfer RNAs. The chain is tRNA pseudouridine synthase A from Wolbachia pipientis subsp. Culex pipiens (strain wPip).